Consider the following 76-residue polypeptide: Defensin-like protein 155 (76 aa).

An N-terminal signal peptide occupies residues 1-27 (MAKISCSYLLILMLALSVFSVVEKAKG). Intrachain disulfides connect Cys31–Cys76, Cys40–Cys59, Cys45–Cys70, and Cys49–Cys72.

It belongs to the DEFL family.

It is found in the secreted. The protein is Defensin-like protein 155 (LCR36) of Arabidopsis thaliana (Mouse-ear cress).